Here is a 523-residue protein sequence, read N- to C-terminus: Xanthotoxin 5-hydroxylase CYP82C2 (523 aa).

Residues 1 to 21 (MDTSLFSLFVPILVFVFIALF) traverse the membrane as a helical segment. A heme-binding site is contributed by Cys-462.

Belongs to the cytochrome P450 family. It depends on heme as a cofactor.

The protein localises to the membrane. It catalyses the reaction xanthotoxin + reduced [NADPH--hemoprotein reductase] + O2 = 5-hydroxyxanthotoxin + oxidized [NADPH--hemoprotein reductase] + H2O + 2 H(+). It carries out the reaction indole-3-carbonyl nitrile + reduced [NADPH--hemoprotein reductase] + O2 = 4-hydroxy-indole-3-carbonyl nitrile + oxidized [NADPH--hemoprotein reductase] + H2O + H(+). Functionally, involved in the biosynthetic pathway to 4-hydroxyindole-3-carbonyl nitrile (4-OH-ICN), a cyanogenic metabolite required for inducible pathogen defense. Converts indole-3-carbonyl nitrile (ICN) into 4-OH-ICN. Can hydroxylate xanthotoxin (8-methoxypsoralen) to form 5-hydroxyxanthotoxin (5-hydroxy-8-methoxypsoralen) in vivo and in vitro. This chain is Xanthotoxin 5-hydroxylase CYP82C2, found in Arabidopsis thaliana (Mouse-ear cress).